A 359-amino-acid polypeptide reads, in one-letter code: MATH domain and coiled-coil domain-containing protein At2g42475 (359 aa).

The MATH domain maps to Lys6–Val128. A coiled-coil region spans residues Glu146 to Lys337.

This is MATH domain and coiled-coil domain-containing protein At2g42475 from Arabidopsis thaliana (Mouse-ear cress).